The sequence spans 1006 residues: Transmembrane channel-like protein 5 (1006 aa).

The tract at residues Met1–Glu289 is disordered. Residues Met1–Lys458 lie on the Extracellular side of the membrane. Composition is skewed to polar residues over residues Ser20–Leu30, Thr50–Ser59, and Arg76–His101. Low complexity predominate over residues Ala138–Ser149. The span at Arg239–His250 shows a compositional bias: basic and acidic residues. The chain crosses the membrane as a helical span at residues Phe459–Ala479. At Lys480–Gln485 the chain is on the cytoplasmic side. The helical transmembrane segment at Phe486–Tyr508 threads the bilayer. The Extracellular segment spans residues Thr509–Gln525. A helical transmembrane segment spans residues Leu526–Ser546. The Cytoplasmic segment spans residues Met547–Tyr619. The helical transmembrane segment at Met620–Leu640 threads the bilayer. Topologically, residues Ala641–Pro654 are extracellular. A helical transmembrane segment spans residues Gly655–Tyr675. The Cytoplasmic portion of the chain corresponds to Ser676–Asn698. Residues Ile699–Leu719 traverse the membrane as a helical segment. At Ser720 to Asp732 the chain is on the extracellular side. A helical transmembrane segment spans residues Ile733–Phe753. The Cytoplasmic segment spans residues Leu754 to Leu786. The chain crosses the membrane as a helical span at residues Val787 to Ile807. Over Met808 to Phe835 the chain is Extracellular. A helical transmembrane segment spans residues Phe836–Ile856. Residues Trp857–Asn900 lie on the Cytoplasmic side of the membrane. The chain crosses the membrane as a helical span at residues Leu901 to Leu921. Residues Tyr922 to Ala1006 lie on the Extracellular side of the membrane.

The protein belongs to the TMC family.

The protein localises to the membrane. Its function is as follows. Probable component of an ion channel. Molecular function hasn't been characterized yet. The polypeptide is Transmembrane channel-like protein 5 (Homo sapiens (Human)).